The sequence spans 368 residues: Dihydroorotate dehydrogenase (quinone) (368 aa).

FMN is bound by residues 67–71 (AGFDK) and threonine 91. Substrate is bound at residue lysine 71. 116–120 (NRMGF) provides a ligand contact to substrate. Asparagine 146 and asparagine 179 together coordinate FMN. Asparagine 179 contributes to the substrate binding site. Residue serine 182 is the Nucleophile of the active site. Residue asparagine 184 coordinates substrate. FMN contacts are provided by lysine 222 and threonine 250. 251-252 (NT) provides a ligand contact to substrate. FMN-binding positions include glycine 276, glycine 305, and 326-327 (YS).

It belongs to the dihydroorotate dehydrogenase family. Type 2 subfamily. In terms of assembly, monomer. The cofactor is FMN.

It localises to the cell membrane. The enzyme catalyses (S)-dihydroorotate + a quinone = orotate + a quinol. It participates in pyrimidine metabolism; UMP biosynthesis via de novo pathway; orotate from (S)-dihydroorotate (quinone route): step 1/1. Functionally, catalyzes the conversion of dihydroorotate to orotate with quinone as electron acceptor. This is Dihydroorotate dehydrogenase (quinone) from Streptomyces coelicolor (strain ATCC BAA-471 / A3(2) / M145).